Consider the following 502-residue polypeptide: NAD(P)H-quinone oxidoreductase chain 4, chloroplastic (502 aa).

13 helical membrane passes run 4 to 24 (YPWL…IPLL), 39 to 59 (LGIC…HFDI), 89 to 109 (IGLT…AWPV), 115 to 132 (LFHS…GLFT), 136 to 156 (ILLF…LLSM), 169 to 189 (FILY…TMGL), 209 to 229 (IALE…KLPI), 244 to 264 (HYST…YGLI), 276 to 296 (SIFA…AASI), 315 to 335 (MGFV…GAIL), 387 to 407 (SLAL…PGIV), 418 to 438 (IIIT…LLSM), and 466 to 486 (IFIS…PNLI).

Belongs to the complex I subunit 4 family.

It is found in the plastid. It localises to the chloroplast thylakoid membrane. The catalysed reaction is a plastoquinone + NADH + (n+1) H(+)(in) = a plastoquinol + NAD(+) + n H(+)(out). The enzyme catalyses a plastoquinone + NADPH + (n+1) H(+)(in) = a plastoquinol + NADP(+) + n H(+)(out). In Huperzia lucidula (Shining clubmoss), this protein is NAD(P)H-quinone oxidoreductase chain 4, chloroplastic.